The sequence spans 90 residues: Phosphocarrier protein NPr (90 aa).

The 89-residue stretch at 2-90 (TVKQTVEITN…ALFNSGFDED (89 aa)) folds into the HPr domain. Histidine 16 (pros-phosphohistidine intermediate) is an active-site residue.

Belongs to the HPr family.

The protein resides in the cytoplasm. In terms of biological role, component of the phosphoenolpyruvate-dependent nitrogen-metabolic phosphotransferase system (nitrogen-metabolic PTS), that seems to be involved in regulating nitrogen metabolism. The phosphoryl group from phosphoenolpyruvate (PEP) is transferred to the phosphoryl carrier protein NPr by enzyme I-Ntr. Phospho-NPr then transfers it to EIIA-Ntr. Could function in the transcriptional regulation of sigma-54 dependent operons in conjunction with the NPr (PtsO) and EIIA-Ntr (PtsN) proteins. The sequence is that of Phosphocarrier protein NPr (ptsO) from Escherichia coli O157:H7.